Consider the following 708-residue polypeptide: Polyribonucleotide nucleotidyltransferase (708 aa).

Mg(2+) contacts are provided by aspartate 488 and aspartate 494. Residues 555 to 614 enclose the KH domain; sequence PRIYTMKIPQKKIAEVIGKGGATIRQLTEETGTTIEIGDDGTIKIAATDGESAANAISRI. An S1 motif domain is found at 624 to 692; the sequence is GTIYEGKVVR…RQGRVRLSIK (69 aa).

Belongs to the polyribonucleotide nucleotidyltransferase family. As to quaternary structure, component of the RNA degradosome, which is a multiprotein complex involved in RNA processing and mRNA degradation. It depends on Mg(2+) as a cofactor.

It is found in the cytoplasm. The catalysed reaction is RNA(n+1) + phosphate = RNA(n) + a ribonucleoside 5'-diphosphate. Functionally, involved in mRNA degradation. Catalyzes the phosphorolysis of single-stranded polyribonucleotides processively in the 3'- to 5'-direction. The chain is Polyribonucleotide nucleotidyltransferase from Pseudoalteromonas translucida (strain TAC 125).